A 587-amino-acid chain; its full sequence is Formate--tetrahydrofolate ligase (587 aa).

73 to 80 (TPLGEGKS) contacts ATP.

Belongs to the formate--tetrahydrofolate ligase family.

The enzyme catalyses (6S)-5,6,7,8-tetrahydrofolate + formate + ATP = (6R)-10-formyltetrahydrofolate + ADP + phosphate. It participates in one-carbon metabolism; tetrahydrofolate interconversion. The polypeptide is Formate--tetrahydrofolate ligase (Syntrophobacter fumaroxidans (strain DSM 10017 / MPOB)).